The sequence spans 94 residues: Co-chaperonin GroES (94 aa).

Positions 17–53 (DSNPNSPIQLPDSAKKKPTKGKVVSVGPGASNSDGKV) are disordered.

The protein belongs to the GroES chaperonin family. Heptamer of 7 subunits arranged in a ring. Interacts with the chaperonin GroEL.

It localises to the cytoplasm. Functionally, together with the chaperonin GroEL, plays an essential role in assisting protein folding. The GroEL-GroES system forms a nano-cage that allows encapsulation of the non-native substrate proteins and provides a physical environment optimized to promote and accelerate protein folding. GroES binds to the apical surface of the GroEL ring, thereby capping the opening of the GroEL channel. The protein is Co-chaperonin GroES of Anaplasma phagocytophilum (strain HZ).